Consider the following 304-residue polypeptide: Oxygen-dependent coproporphyrinogen-III oxidase (304 aa).

A substrate-binding site is contributed by S93. H97 and H107 together coordinate a divalent metal cation. Catalysis depends on H107, which acts as the Proton donor. 109-111 (NVR) provides a ligand contact to substrate. H146 and H176 together coordinate a divalent metal cation. The interval 241-276 (YVEFNLVYDRGTLFGLQSGGRTESILMSLPPQVRWG) is important for dimerization. 259–261 (GGR) provides a ligand contact to substrate.

This sequence belongs to the aerobic coproporphyrinogen-III oxidase family. Homodimer. A divalent metal cation serves as cofactor.

The protein localises to the cytoplasm. The enzyme catalyses coproporphyrinogen III + O2 + 2 H(+) = protoporphyrinogen IX + 2 CO2 + 2 H2O. The protein operates within porphyrin-containing compound metabolism; protoporphyrin-IX biosynthesis; protoporphyrinogen-IX from coproporphyrinogen-III (O2 route): step 1/1. Involved in the heme biosynthesis. Catalyzes the aerobic oxidative decarboxylation of propionate groups of rings A and B of coproporphyrinogen-III to yield the vinyl groups in protoporphyrinogen-IX. The protein is Oxygen-dependent coproporphyrinogen-III oxidase of Pseudomonas syringae pv. tomato (strain ATCC BAA-871 / DC3000).